Consider the following 308-residue polypeptide: Acetyl-coenzyme A carboxylase carboxyl transferase subunit beta 1 (308 aa).

The CoA carboxyltransferase N-terminal domain maps to 25–294 (VWTKCTSCEQ…PLVVSVNESP (270 aa)). 4 residues coordinate Zn(2+): Cys-29, Cys-32, Cys-48, and Cys-51. The C4-type zinc-finger motif lies at 29–51 (CTSCEQVLYHAELERNLEVCPKC). Residues 288-308 (VSVNESPNEEPYSVPEVDEKG) are disordered.

The protein belongs to the AccD/PCCB family. Acetyl-CoA carboxylase is a heterohexamer composed of biotin carboxyl carrier protein (AccB), biotin carboxylase (AccC) and two subunits each of ACCase subunit alpha (AccA) and ACCase subunit beta (AccD). Zn(2+) serves as cofactor.

Its subcellular location is the cytoplasm. It catalyses the reaction N(6)-carboxybiotinyl-L-lysyl-[protein] + acetyl-CoA = N(6)-biotinyl-L-lysyl-[protein] + malonyl-CoA. Its pathway is lipid metabolism; malonyl-CoA biosynthesis; malonyl-CoA from acetyl-CoA: step 1/1. In terms of biological role, component of the acetyl coenzyme A carboxylase (ACC) complex. Biotin carboxylase (BC) catalyzes the carboxylation of biotin on its carrier protein (BCCP) and then the CO(2) group is transferred by the transcarboxylase to acetyl-CoA to form malonyl-CoA. In Vibrio parahaemolyticus serotype O3:K6 (strain RIMD 2210633), this protein is Acetyl-coenzyme A carboxylase carboxyl transferase subunit beta 1.